We begin with the raw amino-acid sequence, 123 residues long: Small ribosomal subunit protein uS12 (123 aa).

Asp-89 bears the 3-methylthioaspartic acid mark.

Belongs to the universal ribosomal protein uS12 family. As to quaternary structure, part of the 30S ribosomal subunit. Contacts proteins S8 and S17. May interact with IF1 in the 30S initiation complex.

Functionally, with S4 and S5 plays an important role in translational accuracy. Interacts with and stabilizes bases of the 16S rRNA that are involved in tRNA selection in the A site and with the mRNA backbone. Located at the interface of the 30S and 50S subunits, it traverses the body of the 30S subunit contacting proteins on the other side and probably holding the rRNA structure together. The combined cluster of proteins S8, S12 and S17 appears to hold together the shoulder and platform of the 30S subunit. This is Small ribosomal subunit protein uS12 from Orientia tsutsugamushi (strain Boryong) (Rickettsia tsutsugamushi).